The primary structure comprises 327 residues: Protoheme IX farnesyltransferase (327 aa).

The next 7 membrane-spanning stretches (helical) occupy residues 55-75 (LVCT…LNCL), 101-121 (AAFV…VSGV), 124-144 (LAAG…TALL), 152-172 (IVVG…AATG), 180-200 (WLFA…ALLL), 237-257 (FLGI…ILPF), and 278-298 (AKGL…LLVM).

This sequence belongs to the UbiA prenyltransferase family. Protoheme IX farnesyltransferase subfamily.

It localises to the cell inner membrane. It catalyses the reaction heme b + (2E,6E)-farnesyl diphosphate + H2O = Fe(II)-heme o + diphosphate. Its pathway is porphyrin-containing compound metabolism; heme O biosynthesis; heme O from protoheme: step 1/1. Functionally, converts heme B (protoheme IX) to heme O by substitution of the vinyl group on carbon 2 of heme B porphyrin ring with a hydroxyethyl farnesyl side group. This is Protoheme IX farnesyltransferase from Synechococcus sp. (strain CC9311).